Consider the following 584-residue polypeptide: Outer membrane transporter CdiB-2 (584 aa).

Residues 1-20 form the signal peptide; that stretch reads MATRFAILPVTALITLTAQA. The span at 24–44 shows a compositional bias: low complexity; the sequence is PTPNDQAAAARANAEQNQQAQ. The disordered stretch occupies residues 24-72; the sequence is PTPNDQAAAARANAEQNQQAQQRRDAQQRDATVQAPGVRSDVPRPEAYP. Residues 98–171 enclose the POTRA domain; sequence SKAQGASALP…GALKLALIPG (74 aa).

Belongs to the TPS (TC 1.B.20) family.

It is found in the cell outer membrane. Its function is as follows. Potential outer membrane protein component of a toxin-immunity protein module, which functions as a cellular contact-dependent growth inhibition (CDI) system. CDI modules allow bacteria to communicate with and inhibit the growth of closely related neighboring bacteria in a contact-dependent fashion. This protein may be required for secretion and assembly of the CdiA toxin protein. Functionally, expression of this cdiAIB locus in B.thailandensis confers protection against other bacteria carrying the locus; growth inhibition requires cellular contact. Probable member of a two partner secretion pathway (TPS) in which it mediates the secretion of CdiA2. The sequence is that of Outer membrane transporter CdiB-2 (cdiB2) from Burkholderia pseudomallei (strain 1026b).